Reading from the N-terminus, the 292-residue chain is MNNYFDAGNFNTVFNNPNQMSVHGYDPKSGFNNHGFMNRNNLLSNNLCNNLLDEEITEYSVLIDSKDRNYQVYPDPFKYTVKFNPLRRTTEIIDGEKVVNEEPMPVINDNFKNVKYIRLESIILPFYTKIRFVDEDIDGDIVQRAKVNTSKPLTDNLYVLMRIEEFKGVNYKSSNDVLAESFAVIYFDNKISNTHYEGKCNGGIKIFPSDKLGTINSLKISFVSPYGEEINCDHLMKEIKSNMICNCDDPEGDEYTDCFKHNLFHPLNPIFQHHVHFKIGVVTPRLNKLNFN.

Its subcellular location is the virion. This is an uncharacterized protein from Acanthamoeba polyphaga (Amoeba).